We begin with the raw amino-acid sequence, 382 residues long: MFENTNPDVMLKMKKYGYLAFWAIMVPLVPFSAFVGVESGTQDYWAWFMYAFIFGIIPVLDYLVGKDPTNPSEDVQVPTMSEEVFYRVSAIAMGFVWIAVLFYAGHIFMNNGYGLLGKIGWIVSIGTVGGIIAINLGHELIHKDPKVENWMGGLLLSSVTYAGFKVEHVRGHHVHVSTPDDASSSRYNQSLYNFLPKAFVHNFINAWSLEKKYLERKGKKNISVHNELIWWYSISALFAATFGLLWGWQGVVFFLGQSFFAALALEIINYIEHYGLHRRVNDKGRFERVTPAHSWNSNFLLTNLALFQLQRHSDHHAYAKRRYQVLRHYEESPQLPAGYATMYVLALIPPLWRKVMNPRVEAYYEGELDQLFRDGKRVNNIA.

A run of 4 helical transmembrane segments spans residues 17–37 (GYLA…FVGV), 45–65 (WAWF…YLVG), 88–108 (VSAI…GHIF), and 114–134 (GLLG…IIAI). Residues His-138, His-142, His-168, His-172, and His-173 each coordinate Fe cation. The chain crosses the membrane as a helical span at residues 236–256 (ALFAATFGLLWGWQGVVFFLG). Fe cation contacts are provided by His-312, His-315, and His-316.

The protein belongs to the fatty acid desaturase type 1 family. AlkB subfamily. Requires Fe(3+) as cofactor.

The protein resides in the cell inner membrane. It catalyses the reaction octane + 2 reduced [rubredoxin] + O2 + 2 H(+) = 2 oxidized [rubredoxin] + octan-1-ol + H2O. The protein operates within hydrocarbon metabolism; alkane degradation. In terms of biological role, catalyzes the hydroxylation of n-alkanes in the presence of a NADH-rubredoxin reductase and rubredoxin. It preferably hydroxylases C8-C16 hydrocarbons. This Alcanivorax borkumensis (strain ATCC 700651 / DSM 11573 / NCIMB 13689 / SK2) protein is Alkane 1-monooxygenase 2 (alkB2).